Consider the following 292-residue polypeptide: Lipoyl synthase (292 aa).

Residues cysteine 34, cysteine 39, cysteine 45, cysteine 60, cysteine 64, cysteine 67, and serine 273 each contribute to the [4Fe-4S] cluster site. The Radical SAM core domain occupies 46 to 262 (WNKKHATVMI…KYVAYSKGFL (217 aa)).

Belongs to the radical SAM superfamily. Lipoyl synthase family. [4Fe-4S] cluster is required as a cofactor.

The protein resides in the cytoplasm. It catalyses the reaction [[Fe-S] cluster scaffold protein carrying a second [4Fe-4S](2+) cluster] + N(6)-octanoyl-L-lysyl-[protein] + 2 oxidized [2Fe-2S]-[ferredoxin] + 2 S-adenosyl-L-methionine + 4 H(+) = [[Fe-S] cluster scaffold protein] + N(6)-[(R)-dihydrolipoyl]-L-lysyl-[protein] + 4 Fe(3+) + 2 hydrogen sulfide + 2 5'-deoxyadenosine + 2 L-methionine + 2 reduced [2Fe-2S]-[ferredoxin]. Its pathway is protein modification; protein lipoylation via endogenous pathway; protein N(6)-(lipoyl)lysine from octanoyl-[acyl-carrier-protein]: step 2/2. Catalyzes the radical-mediated insertion of two sulfur atoms into the C-6 and C-8 positions of the octanoyl moiety bound to the lipoyl domains of lipoate-dependent enzymes, thereby converting the octanoylated domains into lipoylated derivatives. In Ehrlichia ruminantium (strain Welgevonden), this protein is Lipoyl synthase.